The sequence spans 419 residues: 1,4-beta-D-glucan cellobiohydrolase CEL6B (419 aa).

The N-terminal stretch at 1 to 47 (MGESFLLLQPASPALSPTPSSLLLGPTITMRADVLIAALATGALVAA) is a signal peptide. Substrate is bound by residues W111 and S113. Catalysis depends on proton donor residues D152 and D199. W247 is a substrate binding site. N284 is a glycosylation site (N-linked (GlcNAc...) asparagine). N287 is a substrate binding site. N-linked (GlcNAc...) asparagine glycosylation occurs at N298. Substrate is bound at residue W347. The N-linked (GlcNAc...) asparagine glycan is linked to N364. Positions 375 and 379 each coordinate substrate.

Belongs to the glycosyl hydrolase 6 (cellulase B) family. Both N- and O-glycosylated.

It is found in the secreted. It catalyses the reaction Hydrolysis of (1-&gt;4)-beta-D-glucosidic linkages in cellulose and cellotetraose, releasing cellobiose from the non-reducing ends of the chains.. Its function is as follows. Exoglucanase that plays an important function in biomass degradation by catalyzing the hydrolysis of the non-reducing end beta-1,4-glucosidic linkages in cellulose and cellotetraose to release cellobiose. Hydrolyzes crystalline and amorphous cellulose but is inactive on hydroxyethyl cellulose, mannan, galactomannan, xyloglucan, arabinoxylan, arabinan, xylan, and pectin. In Podospora anserina (strain S / ATCC MYA-4624 / DSM 980 / FGSC 10383) (Pleurage anserina), this protein is 1,4-beta-D-glucan cellobiohydrolase CEL6B.